The sequence spans 132 residues: UPF0201 protein MTH_433 (132 aa).

The protein belongs to the UPF0201 family.

The chain is UPF0201 protein MTH_433 from Methanothermobacter thermautotrophicus (strain ATCC 29096 / DSM 1053 / JCM 10044 / NBRC 100330 / Delta H) (Methanobacterium thermoautotrophicum).